Reading from the N-terminus, the 396-residue chain is Tryptophan synthase beta chain (396 aa).

Lys88 carries the post-translational modification N6-(pyridoxal phosphate)lysine.

The protein belongs to the TrpB family. As to quaternary structure, tetramer of two alpha and two beta chains. Pyridoxal 5'-phosphate serves as cofactor.

It carries out the reaction (1S,2R)-1-C-(indol-3-yl)glycerol 3-phosphate + L-serine = D-glyceraldehyde 3-phosphate + L-tryptophan + H2O. Its pathway is amino-acid biosynthesis; L-tryptophan biosynthesis; L-tryptophan from chorismate: step 5/5. Functionally, the beta subunit is responsible for the synthesis of L-tryptophan from indole and L-serine. In Shewanella oneidensis (strain ATCC 700550 / JCM 31522 / CIP 106686 / LMG 19005 / NCIMB 14063 / MR-1), this protein is Tryptophan synthase beta chain.